A 249-amino-acid polypeptide reads, in one-letter code: Sugar fermentation stimulation protein homolog (249 aa).

It belongs to the SfsA family.

The chain is Sugar fermentation stimulation protein homolog from Prochlorococcus marinus (strain MIT 9515).